The following is a 396-amino-acid chain: Purine ribonucleoside efflux pump NepI (396 aa).

Residues 1-21 lie on the Cytoplasmic side of the membrane; the sequence is MSEFIAENRGANAITRPNWSA. A helical membrane pass occupies residues 22–42; that stretch reads VFSVAFCVACLIIVEFLPVSL. At 43–54 the chain is on the periplasmic side; that stretch reads LTPMAQDLGISE. Residues 55–75 traverse the membrane as a helical segment; sequence GVAGQSVTVTAFVAMFASLFI. The Cytoplasmic segment spans residues 76-85; that stretch reads TQTIQATDRR. The helical transmembrane segment at 86–106 threads the bilayer; sequence YVVILFAVLLTLSCLLVSFAN. Ser-107 is a topological domain (periplasmic). Residues 108-128 form a helical membrane-spanning segment; the sequence is FSLLLIGRACLGVALGGFWAI. Over 129–147 the chain is Cytoplasmic; sequence SASLTMRLVPPRTVPKALS. The helical transmembrane segment at 148–168 threads the bilayer; that stretch reads VIFGAVSIALVIAAPLGSFLG. At 169–175 the chain is on the periplasmic side; the sequence is ELIGWRN. Residues 176–196 form a helical membrane-spanning segment; the sequence is VFNAAAAMGVLCIFWIIKSLP. Topologically, residues 197–215 are cytoplasmic; it reads SLPGEPSHQKQNTFRLLQR. A helical transmembrane segment spans residues 216–236; that stretch reads PGVMAGMIAIFMSFAGQFAFF. Residues 237-255 lie on the Periplasmic side of the membrane; it reads TYIRPVYMNLAGFGVDGLT. A helical membrane pass occupies residues 256-276; the sequence is LVLLSFGIASFVGTSLSSFIL. Over 277-281 the chain is Cytoplasmic; sequence KRSVK. The helical transmembrane segment at 282 to 302 threads the bilayer; the sequence is LALAGAPFVLALSALVLTLWG. Topologically, residues 303–305 are periplasmic; that stretch reads SDK. Residues 306-326 form a helical membrane-spanning segment; sequence IVATGVAIIWGLTFALIPVGW. Over 327 to 343 the chain is Cytoplasmic; sequence STWITRSLADQAEKAGS. The chain crosses the membrane as a helical span at residues 344–364; that stretch reads IQVAVIQLANTCGAAIGGYAL. The Periplasmic segment spans residues 365–366; that stretch reads DN. A helical transmembrane segment spans residues 367 to 387; sequence IGLTSPLMLSGTLMLLTALLV. Topologically, residues 388–396 are cytoplasmic; the sequence is TAKVKMKKS.

The protein belongs to the major facilitator superfamily. DHA1 family. NepI (TC 2.A.1.2.26) subfamily.

It localises to the cell inner membrane. It carries out the reaction inosine(in) + H(+)(out) = inosine(out) + H(+)(in). The catalysed reaction is guanosine(in) + H(+)(out) = guanosine(out) + H(+)(in). Functionally, involved in the efflux of purine ribonucleosides, such as inosine and guanosine. This Escherichia coli O6:K15:H31 (strain 536 / UPEC) protein is Purine ribonucleoside efflux pump NepI.